Here is a 620-residue protein sequence, read N- to C-terminus: Chaperone protein HscA homolog (620 aa).

The protein belongs to the heat shock protein 70 family.

Chaperone involved in the maturation of iron-sulfur cluster-containing proteins. Has a low intrinsic ATPase activity which is markedly stimulated by HscB. The sequence is that of Chaperone protein HscA homolog from Pseudomonas syringae pv. tomato (strain ATCC BAA-871 / DC3000).